The following is a 145-amino-acid chain: Bacilliredoxin BrxB (145 aa).

Active-site nucleophile residues include Cys-52 and Cys-54. An S-bacillithiol cysteine disulfide modification is found at Cys-52. The CXC active site motif signature appears at Cys-52–Cys-54. A disulfide bond links Cys-52 and Cys-54.

This sequence belongs to the bacilliredoxin family. As to quaternary structure, interacts with BrxC. Post-translationally, N-terminal Cys of the CXC active site motif can react with bacillithiol (BSH) to form mixed disulfides. S-bacillithiolation protects Cys residues against overoxidation by acting as a redox switch in response to oxidative stress.

Functionally, S-bacillithiolation is the formation of mixed disulfide bonds between protein thiols and the general thiol reductant bacillithiol (BSH) under oxidative stress. BSH is an equivalent of glutathione (GSH) in Firmicutes. This protein is a dithiol bacilliredoxin, which debacillithiolates (removes BSH) the S-bacillithiolated OhrR (OhrR-SSB) in vitro and in vivo NaOCl-generated S-bacillithiolated MetE (MetE-SSB). Involved in maintaining redox homeostasis in response to disulfide stress conditions. The protein is Bacilliredoxin BrxB of Bacillus subtilis (strain 168).